Reading from the N-terminus, the 553-residue chain is Transcription factor GAMYB (553 aa).

The segment covering 1–17 (MYRVKSESDCEMIHQEQ) has biased composition (basic and acidic residues). The tract at residues 1–45 (MYRVKSESDCEMIHQEQMDSPVADDGSSGGSPHRGGGPPLKKGPW) is disordered. Residues 27-38 (SSGGSPHRGGGP) show a composition bias toward gly residues. 2 HTH myb-type domains span residues 37-89 (GPPL…ANHL) and 90-144 (RPNL…KRCQ). DNA-binding regions (H-T-H motif) lie at residues 65–89 (WNAV…ANHL) and 117–140 (WARM…NTRI). Residues 464-488 (PAQSTSMGSGEQVMGPKYEPGDTSP) form a disordered region.

The protein resides in the nucleus. Its function is as follows. Transcriptional activator of gibberellin-dependent alpha-amylase expression in aleurone cells. Involved in pollen and floral organs development. May bind to the 5'-TAACAAA-3' box of alpha-amylase promoter. In Oryza sativa subsp. indica (Rice), this protein is Transcription factor GAMYB (GAM1).